Here is a 317-residue protein sequence, read N- to C-terminus: Acetyl-coenzyme A carboxylase carboxyl transferase subunit alpha (317 aa).

The CoA carboxyltransferase C-terminal domain occupies 40-294 (RLQKKSEELT…KARLLTDLED (255 aa)).

This sequence belongs to the AccA family. In terms of assembly, acetyl-CoA carboxylase is a heterohexamer composed of biotin carboxyl carrier protein (AccB), biotin carboxylase (AccC) and two subunits each of ACCase subunit alpha (AccA) and ACCase subunit beta (AccD).

The protein localises to the cytoplasm. It catalyses the reaction N(6)-carboxybiotinyl-L-lysyl-[protein] + acetyl-CoA = N(6)-biotinyl-L-lysyl-[protein] + malonyl-CoA. It participates in lipid metabolism; malonyl-CoA biosynthesis; malonyl-CoA from acetyl-CoA: step 1/1. Its function is as follows. Component of the acetyl coenzyme A carboxylase (ACC) complex. First, biotin carboxylase catalyzes the carboxylation of biotin on its carrier protein (BCCP) and then the CO(2) group is transferred by the carboxyltransferase to acetyl-CoA to form malonyl-CoA. This is Acetyl-coenzyme A carboxylase carboxyl transferase subunit alpha from Actinobacillus succinogenes (strain ATCC 55618 / DSM 22257 / CCUG 43843 / 130Z).